A 566-amino-acid chain; its full sequence is Phenylalanine--tRNA ligase beta subunit (566 aa).

In terms of domain architecture, B5 spans 287–362 (YFQEEVEFNV…IGEGLSSFNP (76 aa)). Asp-340, Asp-346, Glu-349, and Asp-350 together coordinate Mg(2+).

This sequence belongs to the phenylalanyl-tRNA synthetase beta subunit family. Type 2 subfamily. In terms of assembly, tetramer of two alpha and two beta subunits. Requires Mg(2+) as cofactor.

It localises to the cytoplasm. It catalyses the reaction tRNA(Phe) + L-phenylalanine + ATP = L-phenylalanyl-tRNA(Phe) + AMP + diphosphate + H(+). The protein is Phenylalanine--tRNA ligase beta subunit of Borreliella burgdorferi (strain ZS7) (Borrelia burgdorferi).